The primary structure comprises 451 residues: Bifunctional protein GlmU (451 aa).

The tract at residues 1–229 (MQRHAIILAA…FDEIIGVNDR (229 aa)) is pyrophosphorylase. UDP-N-acetyl-alpha-D-glucosamine-binding positions include 8-11 (LAAG), Lys-22, Gln-72, and 77-78 (GT). Asp-102 lines the Mg(2+) pocket. Gly-139, Glu-154, and Asn-227 together coordinate UDP-N-acetyl-alpha-D-glucosamine. Mg(2+) is bound at residue Asn-227. Residues 230–250 (LMLSEAEKALQQRINRYHMEN) are linker. The segment at 251–451 (GVTIIDPSST…QVNKEGYLKK (201 aa)) is N-acetyltransferase. The UDP-N-acetyl-alpha-D-glucosamine site is built by Arg-332 and Lys-350. The active-site Proton acceptor is His-362. Tyr-365 and Asn-376 together coordinate UDP-N-acetyl-alpha-D-glucosamine. Acetyl-CoA-binding positions include 385-386 (NY), Ala-422, and Arg-439.

In the N-terminal section; belongs to the N-acetylglucosamine-1-phosphate uridyltransferase family. The protein in the C-terminal section; belongs to the transferase hexapeptide repeat family. As to quaternary structure, homotrimer. Mg(2+) is required as a cofactor.

Its subcellular location is the cytoplasm. It carries out the reaction alpha-D-glucosamine 1-phosphate + acetyl-CoA = N-acetyl-alpha-D-glucosamine 1-phosphate + CoA + H(+). The enzyme catalyses N-acetyl-alpha-D-glucosamine 1-phosphate + UTP + H(+) = UDP-N-acetyl-alpha-D-glucosamine + diphosphate. It participates in nucleotide-sugar biosynthesis; UDP-N-acetyl-alpha-D-glucosamine biosynthesis; N-acetyl-alpha-D-glucosamine 1-phosphate from alpha-D-glucosamine 6-phosphate (route II): step 2/2. The protein operates within nucleotide-sugar biosynthesis; UDP-N-acetyl-alpha-D-glucosamine biosynthesis; UDP-N-acetyl-alpha-D-glucosamine from N-acetyl-alpha-D-glucosamine 1-phosphate: step 1/1. Its pathway is bacterial outer membrane biogenesis; LPS lipid A biosynthesis. Functionally, catalyzes the last two sequential reactions in the de novo biosynthetic pathway for UDP-N-acetylglucosamine (UDP-GlcNAc). The C-terminal domain catalyzes the transfer of acetyl group from acetyl coenzyme A to glucosamine-1-phosphate (GlcN-1-P) to produce N-acetylglucosamine-1-phosphate (GlcNAc-1-P), which is converted into UDP-GlcNAc by the transfer of uridine 5-monophosphate (from uridine 5-triphosphate), a reaction catalyzed by the N-terminal domain. The polypeptide is Bifunctional protein GlmU (Staphylococcus epidermidis (strain ATCC 35984 / DSM 28319 / BCRC 17069 / CCUG 31568 / BM 3577 / RP62A)).